A 485-amino-acid chain; its full sequence is Rhamnulokinase (485 aa).

8–12 contacts ATP; the sequence is ASSGR. Substrate-binding positions include glycine 78 and 231 to 233; that span reads HDT. Catalysis depends on aspartate 232, which acts as the Proton acceptor. Threonine 254 is a binding site for ATP. Position 291 (asparagine 291) interacts with substrate. Glutamine 299 contributes to the ATP binding site. A disulfide bridge links cysteine 348 with cysteine 365. Glycine 397 contacts ATP. A disulfide bridge links cysteine 408 with cysteine 412.

It belongs to the rhamnulokinase family. The cofactor is Mg(2+).

It carries out the reaction L-rhamnulose + ATP = L-rhamnulose 1-phosphate + ADP + H(+). It participates in carbohydrate degradation; L-rhamnose degradation; glycerone phosphate from L-rhamnose: step 2/3. In terms of biological role, involved in the catabolism of L-rhamnose (6-deoxy-L-mannose). Catalyzes the transfer of the gamma-phosphate group from ATP to the 1-hydroxyl group of L-rhamnulose to yield L-rhamnulose 1-phosphate. The sequence is that of Rhamnulokinase from Yersinia pestis bv. Antiqua (strain Antiqua).